We begin with the raw amino-acid sequence, 309 residues long: Methionyl-tRNA formyltransferase (309 aa).

112–115 lines the (6S)-5,6,7,8-tetrahydrofolate pocket; sequence SLLP.

The protein belongs to the Fmt family.

The enzyme catalyses L-methionyl-tRNA(fMet) + (6R)-10-formyltetrahydrofolate = N-formyl-L-methionyl-tRNA(fMet) + (6S)-5,6,7,8-tetrahydrofolate + H(+). Functionally, attaches a formyl group to the free amino group of methionyl-tRNA(fMet). The formyl group appears to play a dual role in the initiator identity of N-formylmethionyl-tRNA by promoting its recognition by IF2 and preventing the misappropriation of this tRNA by the elongation apparatus. This is Methionyl-tRNA formyltransferase from Bartonella tribocorum (strain CIP 105476 / IBS 506).